We begin with the raw amino-acid sequence, 427 residues long: DNA topoisomerase 6 subunit A (427 aa).

Positions 76 to 209 (LSLSSVQTEI…LNVIAAEKGV (134 aa)) constitute a Topo IIA-type catalytic domain. Tyrosine 170 (O-(5'-phospho-DNA)-tyrosine intermediate) is an active-site residue. 2 residues coordinate Mg(2+): glutamate 256 and aspartate 308.

It belongs to the TOP6A family. In terms of assembly, homodimer. Heterotetramer of two TOP6A and two TOP6B subunits. Interacts with BIN4 and RHL1. The cofactor is Mg(2+). As to expression, highly expressed in leaves, stems, flowers and seedlings.

Its subcellular location is the nucleus. It catalyses the reaction ATP-dependent breakage, passage and rejoining of double-stranded DNA.. Its function is as follows. Component of the DNA topoisomerase VI involved in chromatin organization and progression of endoreduplication cycles. Relaxes both positive and negative superturns and exhibits a strong decatenase activity. Involved in cell-elongation processes. The polypeptide is DNA topoisomerase 6 subunit A (Arabidopsis thaliana (Mouse-ear cress)).